Reading from the N-terminus, the 446-residue chain is Exodeoxyribonuclease 7 large subunit (446 aa).

This sequence belongs to the XseA family. As to quaternary structure, heterooligomer composed of large and small subunits.

The protein resides in the cytoplasm. It carries out the reaction Exonucleolytic cleavage in either 5'- to 3'- or 3'- to 5'-direction to yield nucleoside 5'-phosphates.. In terms of biological role, bidirectionally degrades single-stranded DNA into large acid-insoluble oligonucleotides, which are then degraded further into small acid-soluble oligonucleotides. In Streptococcus thermophilus (strain ATCC BAA-250 / LMG 18311), this protein is Exodeoxyribonuclease 7 large subunit.